We begin with the raw amino-acid sequence, 178 residues long: Large ribosomal subunit protein bL25 (178 aa).

It belongs to the bacterial ribosomal protein bL25 family. CTC subfamily. Part of the 50S ribosomal subunit; part of the 5S rRNA/L5/L18/L25 subcomplex. Contacts the 5S rRNA. Binds to the 5S rRNA independently of L5 and L18.

This is one of the proteins that binds to the 5S RNA in the ribosome where it forms part of the central protuberance. The sequence is that of Large ribosomal subunit protein bL25 from Nitratiruptor sp. (strain SB155-2).